The following is a 377-amino-acid chain: Pseudouridylate synthase RPUSD4, mitochondrial (377 aa).

Positions 51–70 (LRAQKQQQKTKEPAPTNPVQ) are disordered. D153 is a catalytic residue.

This sequence belongs to the pseudouridine synthase RluA family. As to quaternary structure, interacts with 16S mt-rRNA, mt-tRNA(Phe) and mt-tRNA(Met). Forms a regulatory protein-RNA complex, consisting of RCC1L, NGRN, RPUSD3, RPUSD4, TRUB2, FASTKD2 and 16S mt-rRNA.

Its subcellular location is the mitochondrion matrix. The protein localises to the nucleus. It is found in the cytoplasm. It carries out the reaction uridine in 5S rRNA = pseudouridine in 5S rRNA. The enzyme catalyses a uridine in tRNA = a pseudouridine in tRNA. The catalysed reaction is a uridine in mRNA = a pseudouridine in mRNA. In terms of biological role, catalyzes uridine to pseudouridine isomerization (pseudouridylation) of different mitochondrial RNA substrates. Acts on position 1397 in 16S mitochondrial ribosomal RNA (16S mt-rRNA). This modification is required for the assembly of 16S mt-rRNA into a functional mitochondrial ribosome. As a component of a functional protein-RNA module, consisting of RCC1L, NGRN, RPUSD3, RPUSD4, TRUB2, FASTKD2 and 16S mt-rRNA, controls 16S mt-rRNA abundance and is required for intra-mitochondrial translation. Acts on position 39 in mitochondrial tRNA(Phe). Also catalyzes pseudouridylation of mRNAs in nucleus: acts as a regulator of pre-mRNA splicing by mediating pseudouridylation of pre-mRNAs at locations associated with alternatively spliced regions. Pseudouridylation of pre-mRNAs near splice sites directly regulates mRNA splicing and mRNA 3'-end processing. The protein is Pseudouridylate synthase RPUSD4, mitochondrial of Bos taurus (Bovine).